Reading from the N-terminus, the 457-residue chain is Argininosuccinate lyase (457 aa).

Belongs to the lyase 1 family. Argininosuccinate lyase subfamily.

Its subcellular location is the cytoplasm. It carries out the reaction 2-(N(omega)-L-arginino)succinate = fumarate + L-arginine. It functions in the pathway amino-acid biosynthesis; L-arginine biosynthesis; L-arginine from L-ornithine and carbamoyl phosphate: step 3/3. This Staphylococcus carnosus (strain TM300) protein is Argininosuccinate lyase.